We begin with the raw amino-acid sequence, 224 residues long: uncharacterized protein (224 aa).

The N-terminal stretch at 1–16 (MKILYSFLLLPFFSCA) is a signal peptide.

This is an uncharacterized protein from Escherichia coli.